Reading from the N-terminus, the 607-residue chain is Glycerophosphodiester phosphodiesterase domain-containing protein 5 (607 aa).

At 1–42 (MVRHQPLQYYEPQLCLSCLTGIYGCRWKRYQRSHDDTTPWER) the chain is on the cytoplasmic side. Disulfide bonds link C15-C18 and C25-C571. Residues 43 to 63 (LWFLLLVCTFSLTLTWLYFWW) traverse the membrane as a helical segment. The Extracellular segment spans residues 64-89 (GVHNDYDEFNWYLYNRMGYWSDWSVP). The chain crosses the membrane as a helical span at residues 90–110 (ILVTSAAAFTYIAGLLVLALC). The Cytoplasmic portion of the chain corresponds to 111–125 (HIAVGQQLNLHWIHK). Residues 126-146 (MGLVVILASTVVAMSAVAQLW) traverse the membrane as a helical segment. At 147 to 160 (EDEWEVLLISLQGT) the chain is on the extracellular side. Residues 161–181 (APFLHIGALVAITALSWIVAG) traverse the membrane as a helical segment. Residues 182 to 192 (QFARAERSSSQ) lie on the Cytoplasmic side of the membrane. Residues 193-213 (LTILCTFFAVVFTFYLIPLTI) traverse the membrane as a helical segment. Residues 214–496 (SSPCIMEKKD…PLWIMPPDEY (283 aa)) lie on the Extracellular side of the membrane. In terms of domain architecture, GP-PDE spans 228–485 (PALIGHRGAP…DNSHTLSRVP (258 aa)). N301, N336, N352, N374, and N448 each carry an N-linked (GlcNAc...) asparagine glycan. Residues 497 to 517 (CLMWVTADLISFSLIIGIFVL) traverse the membrane as a helical segment. Residues 518–607 (QKWRLGGIRS…AKTVTEQSGH (90 aa)) are Cytoplasmic-facing. The segment at 582-607 (ANSTATPVGPRNAGSRAKTVTEQSGH) is disordered.

Belongs to the glycerophosphoryl diester phosphodiesterase family. Interacts with PRDX1; forms a mixed-disulfide with PRDX1, leading to disrupt intramolecular disulfide bond between Cys-25 and Cys-571. Post-translationally, intramolecular disulfide bond between Cys-25 and Cys-571 is reduced by PRDX1. Detected in brain, lung, heart, kidney and testis.

The protein resides in the endomembrane system. It is found in the cytoplasm. The protein localises to the perinuclear region. Its subcellular location is the cell projection. It localises to the growth cone. It catalyses the reaction a 1,2-diacyl-sn-glycero-3-phospho-(1D-myo-inositol-4,5-bisphosphate) + H2O = 1D-myo-inositol 1,4,5-trisphosphate + a 1,2-diacyl-sn-glycerol + H(+). The enzyme catalyses sn-glycerol 3-phosphocholine + H2O = sn-glycerol 3-phosphate + choline + H(+). With respect to regulation, inhibited by high level of NaCl or urea. Functionally, glycerophosphodiester phosphodiesterase that promotes neurite formation and drives spinal motor neuron differentiation. Mediates the cleavage of glycosylphosphatidylinositol (GPI) anchor of target proteins: removes the GPI-anchor of RECK, leading to release RECK from the plasma membrane. May contribute to the osmotic regulation of cellular glycerophosphocholine. This chain is Glycerophosphodiester phosphodiesterase domain-containing protein 5, found in Mus musculus (Mouse).